Here is a 414-residue protein sequence, read N- to C-terminus: Light-independent protochlorophyllide reductase subunit N (414 aa).

[4Fe-4S] cluster-binding residues include Cys16, Cys41, and Cys98.

The protein belongs to the BchN/ChlN family. In terms of assembly, protochlorophyllide reductase is composed of three subunits; BchL, BchN and BchB. Forms a heterotetramer of two BchB and two BchN subunits. It depends on [4Fe-4S] cluster as a cofactor.

It carries out the reaction chlorophyllide a + oxidized 2[4Fe-4S]-[ferredoxin] + 2 ADP + 2 phosphate = protochlorophyllide a + reduced 2[4Fe-4S]-[ferredoxin] + 2 ATP + 2 H2O. The protein operates within porphyrin-containing compound metabolism; bacteriochlorophyll biosynthesis (light-independent). In terms of biological role, component of the dark-operative protochlorophyllide reductase (DPOR) that uses Mg-ATP and reduced ferredoxin to reduce ring D of protochlorophyllide (Pchlide) to form chlorophyllide a (Chlide). This reaction is light-independent. The NB-protein (BchN-BchB) is the catalytic component of the complex. The protein is Light-independent protochlorophyllide reductase subunit N of Roseiflexus castenholzii (strain DSM 13941 / HLO8).